The chain runs to 628 residues: Serine/threonine-protein kinase Nek11 (628 aa).

Positions 30 to 288 (YVLQQKLGSG…AADILKAPYM (259 aa)) constitute a Protein kinase domain. ATP is bound by residues 36–44 (LGSGSFGTV) and Lys-62. Catalysis depends on Asp-159, which acts as the Proton acceptor. A Phosphoserine; by CHEK1 modification is found at Ser-274. Positions 347-385 (WLRKLQAADERARRLKKIAEENYKENDKRMQALRSRNVG) form a coiled coil. Acidic residues predominate over residues 452–463 (SEDSEEQEEEMI). The disordered stretch occupies residues 452–475 (SEDSEEQEEEMIFSEAGGDTKEEE).

It belongs to the protein kinase superfamily. NEK Ser/Thr protein kinase family. NIMA subfamily. In terms of assembly, interacts with NEK2. Mn(2+) serves as cofactor. It depends on Mg(2+) as a cofactor. In terms of processing, phosphorylated by NEK2. Phosphorylation at Ser-274 is important for its activation.

The protein resides in the nucleus. The protein localises to the nucleolus. It carries out the reaction L-seryl-[protein] + ATP = O-phospho-L-seryl-[protein] + ADP + H(+). It catalyses the reaction L-threonyl-[protein] + ATP = O-phospho-L-threonyl-[protein] + ADP + H(+). Autorepressed by intramolecular binding of the C-terminus which dissociates following phosphorylation by NEK2. Activated in response to DNA damage. Inhibited by zinc. Protein kinase which plays an important role in the G2/M checkpoint response to DNA damage. Controls degradation of CDC25A by directly phosphorylating it on residues whose phosphorylation is required for BTRC-mediated polyubiquitination and degradation. In Mus musculus (Mouse), this protein is Serine/threonine-protein kinase Nek11.